Here is a 433-residue protein sequence, read N- to C-terminus: MSISKTLDKNIKQVNGPINVVRLQGKIGSVNKVVYLFMDRHLAVEYQTECDNIFAKDVHMFFADSFKNIGSTGKTYDFFLEKDAEEITPKIPEELNTSKTKYISEVGKMFKKIFKYDPKANRALTSDIFQNTRFHYIDFRGYLYMDIFEPIDMANYVMENIWNKRDLKSEDLNRIAGQLNIVSQQCQLILQIMDSYSNNKNRDKNNSERQYGVRKITPLKYTTVSESYQKTYKQQKQIQIDYIRYFINKIYTKYNDNTIKSKLINRLEYFKNGIRNLNTEVNNIIVDINNIMTEMTSSSGKLVQYNEKWYYGMPYEKEIMYIADLYNKLRNLNGDSVSYIARLIDIYFLRRFLDKDYITNAILYSGANHSLTDIDILVKDFDFKITHVAYSKYPINQITNSVKKAEFGMVNIQPLFDNNEQCSDVTYFPDNFL.

This sequence belongs to the mimivirus R160 family.

Its subcellular location is the virion. This is an uncharacterized protein from Acanthamoeba polyphaga mimivirus (APMV).